Reading from the N-terminus, the 239-residue chain is Pimeloyl-[acyl-carrier protein] methyl ester esterase (239 aa).

Substrate contacts are provided by residues tryptophan 20, 77 to 78 (SM), and 138 to 142 (FISLQ). Catalysis depends on serine 77, which acts as the Nucleophile. Catalysis depends on residues aspartate 192 and histidine 220. Histidine 220 serves as a coordination point for substrate.

The protein belongs to the AB hydrolase superfamily. Carboxylesterase BioH family. Monomer.

It is found in the cytoplasm. The enzyme catalyses 6-carboxyhexanoyl-[ACP] methyl ester + H2O = 6-carboxyhexanoyl-[ACP] + methanol + H(+). It functions in the pathway cofactor biosynthesis; biotin biosynthesis. Functionally, the physiological role of BioH is to remove the methyl group introduced by BioC when the pimeloyl moiety is complete. It allows to synthesize pimeloyl-ACP via the fatty acid synthetic pathway through the hydrolysis of the ester bonds of pimeloyl-ACP esters. In Legionella pneumophila (strain Corby), this protein is Pimeloyl-[acyl-carrier protein] methyl ester esterase.